Consider the following 466-residue polypeptide: uncharacterized protein (466 aa).

The interval 1–22 (MKKNNERVNTNPSLISKSYNMK) is disordered. The segment covering 7-19 (RVNTNPSLISKSY) has biased composition (polar residues). Residues Ser-40 and Ser-42 each carry the phosphoserine modification. The region spanning 108–183 (YFVHMDNISP…RLISATITNH (76 aa)) is the RRM domain. The disordered stretch occupies residues 186 to 207 (RLPNAEHLESSTKTKDESQDKD). Basic and acidic residues predominate over residues 188–207 (PNAEHLESSTKTKDESQDKD). The CID domain occupies 209–368 (LTKLDRAKLE…RAWRNFSGNT (160 aa)). Ser-371 is modified (phosphoserine). The segment covering 425-436 (STETSSSSSPQP) has biased composition (low complexity). The interval 425–448 (STETSSSSSPQPTEERKAKFKPSF) is disordered.

It is found in the nucleus. The protein resides in the cytoplasm. This is an uncharacterized protein from Schizosaccharomyces pombe (strain 972 / ATCC 24843) (Fission yeast).